Consider the following 717-residue polypeptide: Fatty acid oxidation complex subunit alpha (717 aa).

Positions 1–189 (MIYQSPTIEV…KVGAIDAVVA (189 aa)) are enoyl-CoA hydratase/isomerase. Asp296 is a binding site for substrate. The segment at 311–717 (KKVNSAAVLG…ANNGSYYQQA (407 aa)) is 3-hydroxyacyl-CoA dehydrogenase. NAD(+) is bound by residues Met324, Asp343, 400-402 (VVE), Lys407, and Ser429. The active-site For 3-hydroxyacyl-CoA dehydrogenase activity is the His450. Asn453 contributes to the NAD(+) binding site. Substrate-binding residues include Asn500 and Tyr660.

It in the N-terminal section; belongs to the enoyl-CoA hydratase/isomerase family. In the C-terminal section; belongs to the 3-hydroxyacyl-CoA dehydrogenase family. In terms of assembly, heterotetramer of two alpha chains (FadB) and two beta chains (FadA).

It catalyses the reaction a (3S)-3-hydroxyacyl-CoA + NAD(+) = a 3-oxoacyl-CoA + NADH + H(+). The enzyme catalyses a (3S)-3-hydroxyacyl-CoA = a (2E)-enoyl-CoA + H2O. The catalysed reaction is a 4-saturated-(3S)-3-hydroxyacyl-CoA = a (3E)-enoyl-CoA + H2O. It carries out the reaction (3S)-3-hydroxybutanoyl-CoA = (3R)-3-hydroxybutanoyl-CoA. It catalyses the reaction a (3Z)-enoyl-CoA = a 4-saturated (2E)-enoyl-CoA. The enzyme catalyses a (3E)-enoyl-CoA = a 4-saturated (2E)-enoyl-CoA. It participates in lipid metabolism; fatty acid beta-oxidation. In terms of biological role, involved in the aerobic and anaerobic degradation of long-chain fatty acids via beta-oxidation cycle. Catalyzes the formation of 3-oxoacyl-CoA from enoyl-CoA via L-3-hydroxyacyl-CoA. It can also use D-3-hydroxyacyl-CoA and cis-3-enoyl-CoA as substrate. The sequence is that of Fatty acid oxidation complex subunit alpha from Shewanella halifaxensis (strain HAW-EB4).